The chain runs to 297 residues: Ribosomal RNA small subunit methyltransferase A (297 aa).

Asparagine 31, leucine 33, glycine 58, glutamate 79, aspartate 104, and asparagine 129 together coordinate S-adenosyl-L-methionine.

It belongs to the class I-like SAM-binding methyltransferase superfamily. rRNA adenine N(6)-methyltransferase family. RsmA subfamily.

It localises to the cytoplasm. It carries out the reaction adenosine(1518)/adenosine(1519) in 16S rRNA + 4 S-adenosyl-L-methionine = N(6)-dimethyladenosine(1518)/N(6)-dimethyladenosine(1519) in 16S rRNA + 4 S-adenosyl-L-homocysteine + 4 H(+). In terms of biological role, specifically dimethylates two adjacent adenosines (A1518 and A1519) in the loop of a conserved hairpin near the 3'-end of 16S rRNA in the 30S particle. May play a critical role in biogenesis of 30S subunits. In Staphylococcus aureus (strain MRSA252), this protein is Ribosomal RNA small subunit methyltransferase A.